We begin with the raw amino-acid sequence, 145 residues long: MRTTFMAKANEVERKWYVVDAEGQTLGRLASEVASILRGKNKPTFTPHVDTGDHVIIINAEKIHLTGNKLNDKIYYRHTNHPGGLKQRTALEMRTNYPVQMLELAIKGMLPKGRLGRQVSKKLNVYAGAEHPHQAQKPEVYELRG.

It belongs to the universal ribosomal protein uL13 family. As to quaternary structure, part of the 50S ribosomal subunit.

Functionally, this protein is one of the early assembly proteins of the 50S ribosomal subunit, although it is not seen to bind rRNA by itself. It is important during the early stages of 50S assembly. The polypeptide is Large ribosomal subunit protein uL13 (Bacillus thuringiensis (strain Al Hakam)).